Consider the following 877-residue polypeptide: DNA polymerase I (877 aa).

A 5'-3' exonuclease domain is found at 177-270 (TPAQFIDLKA…LEDLVYSGPD (94 aa)). A 3'-5' exonuclease domain is found at 302 to 465 (DFTIVDQISQ…TEPILLEKLS (164 aa)).

The protein belongs to the DNA polymerase type-A family. In terms of assembly, single-chain monomer with multiple functions.

It carries out the reaction DNA(n) + a 2'-deoxyribonucleoside 5'-triphosphate = DNA(n+1) + diphosphate. In terms of biological role, in addition to polymerase activity, this DNA polymerase exhibits 3'-5' and 5'-3' exonuclease activity. The polypeptide is DNA polymerase I (polA) (Streptococcus pneumoniae (strain ATCC BAA-255 / R6)).